A 92-amino-acid chain; its full sequence is Small ribosomal subunit protein uS19 (92 aa).

The protein belongs to the universal ribosomal protein uS19 family.

In terms of biological role, protein S19 forms a complex with S13 that binds strongly to the 16S ribosomal RNA. The protein is Small ribosomal subunit protein uS19 of Corynebacterium aurimucosum (strain ATCC 700975 / DSM 44827 / CIP 107346 / CN-1) (Corynebacterium nigricans).